The sequence spans 126 residues: MARVKRAVNAQKKRREVLEAASGYRGQRSRLYRKAKEQMLHSMTYSYRDRRARKGDFRQLWITRINAAARANGLTYNRFVQGLRLAGVEVDRKILADLAVNDAAAFAALVEVARAALPAAAETSAA.

It belongs to the bacterial ribosomal protein bL20 family.

In terms of biological role, binds directly to 23S ribosomal RNA and is necessary for the in vitro assembly process of the 50S ribosomal subunit. It is not involved in the protein synthesizing functions of that subunit. The polypeptide is Large ribosomal subunit protein bL20 (Parafrankia sp. (strain EAN1pec)).